The primary structure comprises 710 residues: Protein-glutamine gamma-glutamyltransferase Z (710 aa).

Catalysis depends on residues C279, H338, and D361. Ca(2+) contacts are provided by N401, D403, E450, and E455.

It belongs to the transglutaminase superfamily. Transglutaminase family. Ca(2+) is required as a cofactor. In terms of tissue distribution, widely expressed.

It carries out the reaction L-glutaminyl-[protein] + L-lysyl-[protein] = [protein]-L-lysyl-N(6)-5-L-glutamyl-[protein] + NH4(+). In terms of biological role, catalyzes the cross-linking of proteins and the conjugation of polyamines to proteins. The protein is Protein-glutamine gamma-glutamyltransferase Z (TGM7) of Homo sapiens (Human).